Consider the following 115-residue polypeptide: MIPAKDMAKVMIVMLAICFLTKSDGKSVKKRSVSEIQLMHNLGKHLNSMERVEWLRKKLQDVHNFVALGAPLAPRDAGSQRPRKKEDNVLVESHEKSLGEADKADVNVLTKAKSQ.

A signal peptide spans 1 to 25; it reads MIPAKDMAKVMIVMLAICFLTKSDG. The propeptide occupies 26–31; it reads KSVKKR. The tract at residues 51 to 69 is important for receptor binding; it reads RVEWLRKKLQDVHNFVALG. Positions 73–115 are disordered; the sequence is APRDAGSQRPRKKEDNVLVESHEKSLGEADKADVNVLTKAKSQ. A compositionally biased stretch (basic and acidic residues) spans 84–105; the sequence is KKEDNVLVESHEKSLGEADKAD.

It belongs to the parathyroid hormone family. As to quaternary structure, interacts with PTH1R (via N-terminal extracellular domain).

The protein localises to the secreted. In terms of biological role, parathyroid hormone elevates calcium level by dissolving the salts in bone and preventing their renal excretion. Acts by binding to its receptor, PTH1R, activating G protein-coupled receptor signaling. Stimulates [1-14C]-2-deoxy-D-glucose (2DG) transport and glycogen synthesis in osteoblastic cells. This Homo sapiens (Human) protein is Parathyroid hormone.